An 815-amino-acid chain; its full sequence is Vacuolar proton translocating ATPase 100 kDa subunit (815 aa).

At 1–402 (MSFLRPSIWR…NAYGIAHYRE (402 aa)) the chain is on the cytoplasmic side. The helical transmembrane segment at 403 to 421 (VNPAVLTIVTFPFLFGVMF) threads the bilayer. At 422–423 (GD) the chain is on the vacuolar side. Residues 424 to 440 (VGHGALLLLSALGLISL) traverse the membrane as a helical segment. The Cytoplasmic portion of the chain corresponds to 441–454 (EKKLAGKKLNELIQ). The chain crosses the membrane as a helical span at residues 455–484 (MPFDGRYVLFLMSLFSIYVGFIYNECFSIP). Residues 485–530 (MNIFGSQYNLNSTTGLYTYQHTDRVYPVGVDPLWKGAPNELVYYNS) lie on the Vacuolar side of the membrane. Residues 531 to 550 (FKMKLSIIFGVVQMSVGICF) traverse the membrane as a helical segment. Over 551 to 571 (SLLNYLNQKGPIKIVNILTQF) the chain is Cytoplasmic. Residues 572–592 (VPQMIFLWSIFGYMSVLIILK) traverse the membrane as a helical segment. The Vacuolar segment spans residues 593-639 (WVVPYRSFEVDKVDPPFILPTIIAMFLSPGGTPDVVFFSGQGAVQTA). A helical transmembrane segment spans residues 640–659 (LLFLALISIPVMLVIKPLFM). Residues 660–706 (KRFHFQEVERKKLGHHEEEHDDEALYTGHHGEEFEMGEVFVHQVIHT) are Cytoplasmic-facing. The chain crosses the membrane as a helical span at residues 707–731 (IEFVLGAVSNTASYLRLWALSLAHS). The Vacuolar segment spans residues 732–749 (ELSSVFWERILIGQVERG). A helical transmembrane segment spans residues 750 to 788 (NPFLAFVGFGAWLGASVAVLLLMESLSAFLHALRLHWVE). At 789 to 815 (FQNKFYIGDGVRFIPYSATRILSEDDE) the chain is on the cytoplasmic side.

This sequence belongs to the V-ATPase 116 kDa subunit family. In terms of assembly, the V-ATPase is a heteromultimeric enzyme.

The protein localises to the cytoplasmic vesicle membrane. The protein resides in the endosome membrane. It is found in the vacuole membrane. It localises to the lysosome membrane. Functionally, essential component of the vacuolar proton pump (V-ATPase), a multimeric enzyme that catalyzes the translocation of protons across the membranes. Required for assembly and activity of the V-ATPase. Required in both the contractile vacuole system and the endosomal/lysosomal system. Also required for cytosolic pH regulation. This chain is Vacuolar proton translocating ATPase 100 kDa subunit (vatM), found in Dictyostelium discoideum (Social amoeba).